A 647-amino-acid chain; its full sequence is Chaperone protein DnaK (647 aa).

The residue at position 199 (Thr-199) is a Phosphothreonine; by autocatalysis. Positions 602 to 647 (MYAQEQAQAGQQAGPGAGSASAGQSGEKPVEGEVVDAEFEEVKDKK) are disordered. Residues 604–627 (AQEQAQAGQQAGPGAGSASAGQSG) are compositionally biased toward low complexity.

The protein belongs to the heat shock protein 70 family.

Functionally, acts as a chaperone. The sequence is that of Chaperone protein DnaK from Nitrosomonas eutropha (strain DSM 101675 / C91 / Nm57).